We begin with the raw amino-acid sequence, 427 residues long: Glutamate-1-semialdehyde 2,1-aminomutase (427 aa).

Lys266 is modified (N6-(pyridoxal phosphate)lysine).

This sequence belongs to the class-III pyridoxal-phosphate-dependent aminotransferase family. HemL subfamily. In terms of assembly, homodimer. It depends on pyridoxal 5'-phosphate as a cofactor.

Its subcellular location is the cytoplasm. The enzyme catalyses (S)-4-amino-5-oxopentanoate = 5-aminolevulinate. It participates in porphyrin-containing compound metabolism; protoporphyrin-IX biosynthesis; 5-aminolevulinate from L-glutamyl-tRNA(Glu): step 2/2. In Dechloromonas aromatica (strain RCB), this protein is Glutamate-1-semialdehyde 2,1-aminomutase.